Reading from the N-terminus, the 454-residue chain is CBL-interacting protein kinase 17 (454 aa).

Positions 13–268 constitute a Protein kinase domain; that stretch reads YEMGRTLGEG…MAGIKSHEWF (256 aa). Residues 19 to 27 and Lys-42 contribute to the ATP site; that span reads LGEGNFGKV. The Proton acceptor role is filled by Asp-136. The interval 154–183 is activation loop; that stretch reads DFGLSALPQHLGNDGLLHTTCGSPNYIAPE. Residues 304 to 328 enclose the NAF domain; the sequence is KNSHQINAFQLIGMASSLDLSGFFE. The segment at 334-363 is PPI; that stretch reads QRRIRFTSTHPPKDAFDKIESSATELGFQV.

This sequence belongs to the protein kinase superfamily. CAMK Ser/Thr protein kinase family. SNF1 subfamily. It depends on Mn(2+) as a cofactor.

The enzyme catalyses L-seryl-[protein] + ATP = O-phospho-L-seryl-[protein] + ADP + H(+). It carries out the reaction L-threonyl-[protein] + ATP = O-phospho-L-threonyl-[protein] + ADP + H(+). Functionally, CIPK serine-threonine protein kinases interact with CBL proteins. Binding of a CBL protein to the regulatory NAF domain of CIPK protein lead to the activation of the kinase in a calcium-dependent manner. The sequence is that of CBL-interacting protein kinase 17 (CIPK17) from Oryza sativa subsp. japonica (Rice).